The following is a 535-amino-acid chain: GMP synthase [glutamine-hydrolyzing] (535 aa).

The 191-residue stretch at 20–210 (PVLVVDFGAQ…LHRCAALPND (191 aa)) folds into the Glutamine amidotransferase type-1 domain. Cysteine 97 acts as the Nucleophile in catalysis. Active-site residues include histidine 184 and glutamate 186. The GMPS ATP-PPase domain maps to 211–409 (WDASSIIEDQ…LGLPDEIVWR (199 aa)). 238-244 (SGGVDSA) provides a ligand contact to ATP.

In terms of assembly, homodimer.

The catalysed reaction is XMP + L-glutamine + ATP + H2O = GMP + L-glutamate + AMP + diphosphate + 2 H(+). It functions in the pathway purine metabolism; GMP biosynthesis; GMP from XMP (L-Gln route): step 1/1. Its function is as follows. Catalyzes the synthesis of GMP from XMP. The chain is GMP synthase [glutamine-hydrolyzing] from Bifidobacterium longum (strain NCC 2705).